We begin with the raw amino-acid sequence, 273 residues long: Formamidopyrimidine-DNA glycosylase (273 aa).

The Schiff-base intermediate with DNA role is filled by Pro2. The active-site Proton donor is Glu3. Lys59 serves as the catalytic Proton donor; for beta-elimination activity. His93, Arg111, and Arg154 together coordinate DNA. An FPG-type zinc finger spans residues 239–273 (KVYGRGGEPCKECGHTLVRIRLAGRSTVFCPCCQV). Arg263 (proton donor; for delta-elimination activity) is an active-site residue.

This sequence belongs to the FPG family. Monomer. Requires Zn(2+) as cofactor.

The catalysed reaction is Hydrolysis of DNA containing ring-opened 7-methylguanine residues, releasing 2,6-diamino-4-hydroxy-5-(N-methyl)formamidopyrimidine.. It catalyses the reaction 2'-deoxyribonucleotide-(2'-deoxyribose 5'-phosphate)-2'-deoxyribonucleotide-DNA = a 3'-end 2'-deoxyribonucleotide-(2,3-dehydro-2,3-deoxyribose 5'-phosphate)-DNA + a 5'-end 5'-phospho-2'-deoxyribonucleoside-DNA + H(+). Involved in base excision repair of DNA damaged by oxidation or by mutagenic agents. Acts as a DNA glycosylase that recognizes and removes damaged bases. Has a preference for oxidized purines, such as 7,8-dihydro-8-oxoguanine (8-oxoG). Has AP (apurinic/apyrimidinic) lyase activity and introduces nicks in the DNA strand. Cleaves the DNA backbone by beta-delta elimination to generate a single-strand break at the site of the removed base with both 3'- and 5'-phosphates. This Desulfitobacterium hafniense (strain DSM 10664 / DCB-2) protein is Formamidopyrimidine-DNA glycosylase.